The sequence spans 137 residues: Nucleoside diphosphate kinase (137 aa).

Positions 9, 57, 85, 91, 102, and 112 each coordinate ATP. H115 functions as the Pros-phosphohistidine intermediate in the catalytic mechanism.

Belongs to the NDK family. As to quaternary structure, homotetramer. Requires Mg(2+) as cofactor.

Its subcellular location is the cytoplasm. It carries out the reaction a 2'-deoxyribonucleoside 5'-diphosphate + ATP = a 2'-deoxyribonucleoside 5'-triphosphate + ADP. The catalysed reaction is a ribonucleoside 5'-diphosphate + ATP = a ribonucleoside 5'-triphosphate + ADP. Functionally, major role in the synthesis of nucleoside triphosphates other than ATP. The ATP gamma phosphate is transferred to the NDP beta phosphate via a ping-pong mechanism, using a phosphorylated active-site intermediate. This Wolinella succinogenes (strain ATCC 29543 / DSM 1740 / CCUG 13145 / JCM 31913 / LMG 7466 / NCTC 11488 / FDC 602W) (Vibrio succinogenes) protein is Nucleoside diphosphate kinase.